The following is a 145-amino-acid chain: Large ribosomal subunit protein uL16 (145 aa).

Belongs to the universal ribosomal protein uL16 family. As to quaternary structure, part of the 50S ribosomal subunit.

Binds 23S rRNA and is also seen to make contacts with the A and possibly P site tRNAs. The sequence is that of Large ribosomal subunit protein uL16 from Lachnospira eligens (strain ATCC 27750 / DSM 3376 / VPI C15-48 / C15-B4) (Eubacterium eligens).